The chain runs to 70 residues: Uteroglobin (70 aa).

This sequence belongs to the secretoglobin family. As to quaternary structure, antiparallel homodimer; disulfide-linked. Interaction with LMBR1L is controversial. In terms of tissue distribution, club cells (nonciliated cells of the surface epithelium of the pulmonary airways).

It is found in the secreted. Its function is as follows. Binds phosphatidylcholine, phosphatidylinositol, polychlorinated biphenyls (PCB) and weakly progesterone, potent inhibitor of phospholipase A2. This Macaca fuscata fuscata (Japanese macaque) protein is Uteroglobin (SCGB1A1).